The sequence spans 89 residues: Small ribosomal subunit protein bS16 (89 aa).

This sequence belongs to the bacterial ribosomal protein bS16 family.

The polypeptide is Small ribosomal subunit protein bS16 (Gloeobacter violaceus (strain ATCC 29082 / PCC 7421)).